Consider the following 228-residue polypeptide: uncharacterized protein (228 aa).

A disordered region spans residues 1–34 (MPRDTKPYSRPANAPRPGVKTERSNQFKAASTKY).

This is an uncharacterized protein from Orgyia pseudotsugata (Douglas-fir tussock moth).